Consider the following 265-residue polypeptide: Putative 2-aminoethylphosphonate transport system permease protein PhnV (265 aa).

A run of 6 helical transmembrane segments spans residues 13–33, 69–89, 104–124, 131–151, 185–205, and 233–253; these read GVVA…VILM, LTIG…AALA, VFYL…LVAF, MNGT…AFTF, LPLL…LSMG, and NIAD…LLMM. The 189-residue stretch at 65 to 253 folds into the ABC transmembrane type-1 domain; that stretch reads LLASLTIGFC…LVAITLLLMM (189 aa).

The protein belongs to the binding-protein-dependent transport system permease family.

It is found in the cell inner membrane. Its function is as follows. Probably part of the PhnSTUV complex (TC 3.A.1.11.5) involved in 2-aminoethylphosphonate import. Probably responsible for the translocation of the substrate across the membrane. This Salmonella typhimurium (strain LT2 / SGSC1412 / ATCC 700720) protein is Putative 2-aminoethylphosphonate transport system permease protein PhnV (phnV).